Consider the following 554-residue polypeptide: Protein PNS1 (554 aa).

Low complexity-rich tracts occupy residues 1-19 (MSGPQYGAQPGGYYNNNNN) and 27-45 (SYQMNPMPTDGNYGQQPQY). The disordered stretch occupies residues 1-90 (MSGPQYGAQP…TDGYGGPPPS (90 aa)). Topologically, residues 1 to 105 (MSGPQYGAQP…KVQKPKYNDW (105 aa)) are cytoplasmic. A compositionally biased stretch (pro residues) spans 68–90 (PQGPPPNGSKPPPTDGYGGPPPS). The helical transmembrane segment at 106 to 126 (WAGLLFLATVAGFVAVSAISI) threads the bilayer. The Extracellular portion of the chain corresponds to 127 to 153 (HGYADNRSQNNGSLNGQRNTFGLTTHT). N-linked (GlcNAc...) asparagine glycans are attached at residues Asn-132 and Asn-137. The chain crosses the membrane as a helical span at residues 154-174 (IYLFVWVLICAIVLSYAYMWM). At 175 to 181 (ARKFTKQ) the chain is on the cytoplasmic side. The helical transmembrane segment at 182–202 (FIYATGILNIVMGLVTALYML) threads the bilayer. Over 203 to 206 (SRKY) the chain is Extracellular. Residues 207–227 (WSGGIVFLIFVVLQALFFWSC) form a helical membrane-spanning segment. The Cytoplasmic segment spans residues 228–255 (RSRIPFSTLMLQTAIDVSKVHGHVYLVS). The chain crosses the membrane as a helical span at residues 256–276 (AVGGVIGTLFAAYWAITLVAV). Residues 277 to 297 (YVKFEPDPNNAACRNAGGCSS) are Extracellular-facing. Residues 298–318 (GKVIGLIVFITFAGYWISEWL) form a helical membrane-spanning segment. At 319–352 (KNTIHTTVAGIYGSWYFNSRNYPTKVTRGALKRS) the chain is on the cytoplasmic side. Residues 353–373 (LTYSFGSISLGSLFIAIINLI) form a helical membrane-spanning segment. Over 374-389 (RQLAQAAQQNAAQEGD) the chain is Extracellular. A helical membrane pass occupies residues 390-410 (ILGTILWCIFGCLIGILDWLV). Topologically, residues 411–451 (EFINRYAFCHIALYGKAYFAAAKDTWKMVKDRGIDALINEC) are cytoplasmic. The chain crosses the membrane as a helical span at residues 452-472 (LIGPVLTFGATFVAYACGLIA). The Extracellular segment spans residues 473–487 (YLYMVYTKPAYNDGG). A helical transmembrane segment spans residues 488 to 508 (GFTPVVVAFAFLIGLQVCNVF). The Cytoplasmic segment spans residues 509-554 (TTPLTSGIDTIFVAMAWDPEVLMRDHPDLYHRMVQVYPHVQEAIHA).

It belongs to the CTL (choline transporter-like) family.

It localises to the cell membrane. Its function is as follows. Probably involved in transport through the plasma membrane. The chain is Protein PNS1 (pns-1) from Neurospora crassa (strain ATCC 24698 / 74-OR23-1A / CBS 708.71 / DSM 1257 / FGSC 987).